Here is a 166-residue protein sequence, read N- to C-terminus: Large ribosomal subunit protein uL10 (166 aa).

Part of the ribosomal stalk of the 50S ribosomal subunit. The N-terminus interacts with L11 and 23S rRNA to form the base of the stalk. The C-terminus forms an elongated spine to which L12 dimers bind in a sequential fashion forming a pentameric L10(L12)2(L12)2 complex.

Forms part of the ribosomal stalk, playing a central role in the interaction of the ribosome with GTP-bound translation factors (such as IF-2, EF-Tu, EF-G and RF3). The sequence is that of Large ribosomal subunit protein uL10 (rplJ) from Bacillus subtilis (strain 168).